A 373-amino-acid polypeptide reads, in one-letter code: Glutamine synthetase (373 aa).

In terms of domain architecture, GS beta-grasp spans 24–106 (EKVQAMYIWI…VLCEVFKYNR (83 aa)). The GS catalytic domain occupies 113–373 (LRHTCRRIMD…TGDEPFEYKN (261 aa)). Glu134 serves as a coordination point for ATP. 4 residues coordinate Mn(2+): Glu134, Glu136, Glu196, and Glu203. An ATP-binding site is contributed by 203–208 (EFQVGP). 246–247 (NW) is a binding site for L-glutamate. His253 contributes to the Mn(2+) binding site. Residues 255–257 (NFS), Arg319, and Arg324 contribute to the ATP site. Arg319 contacts L-glutamate. Position 336 to 338 (336 to 338 (YFE)) interacts with ADP. Residue Glu338 coordinates Mn(2+). An L-glutamate-binding site is contributed by Arg340.

The protein belongs to the glutamine synthetase family. Homooctamer and homotetramer. Requires biotin as cofactor. Mg(2+) is required as a cofactor. Mn(2+) serves as cofactor. As to expression, expressed in retina, brain and liver. Little or no detectable expression in breast muscle, pancreas and spleen.

It is found in the cytoplasm. The protein resides in the mitochondrion. It carries out the reaction L-glutamate + NH4(+) + ATP = L-glutamine + ADP + phosphate + H(+). The enzyme catalyses L-glutamate + H(+) = 4-aminobutanoate + CO2. Glutamate to glutamine ratio influences catalytic activity. At glutamate to glutamine ratios greater than 4, decarboxylase activity ceases. In the presence of manganese, synthetase activity is limited to concentrations between 10 mM and 20 mM, whereas decarboxylase activity is not affected. Both catalytic activities are inhibited by avidin. Its function is as follows. Glutamine synthetase that catalyzes the ATP-dependent conversion of glutamate and ammonia to glutamine. When expressed in liver, it may be involved in detoxifying intramitochondrially generated ammonia. Also acts as glutamate decarboxylase by catalyzing the production of 4-aminobutanoate (gamma-aminobutyric acid, GABA) in a pyridoxal phosphate-independent manner. In Gallus gallus (Chicken), this protein is Glutamine synthetase.